Reading from the N-terminus, the 125-residue chain is Mitochondrial import inner membrane translocase subunit TIM16 (125 aa).

Positions 58–110 (EAQQILNVSKLSPEEVQKNYEHLFKVNDKSVGGSFYLQSKVVRAKERLDEELR) are J-like. Serine 69 carries the post-translational modification Phosphoserine.

The protein belongs to the TIM16/PAM16 family. As to quaternary structure, probable component of the PAM complex at least composed of a mitochondrial HSP70 protein, GRPEL1 or GRPEL2, TIMM44, TIMM16/PAM16 and TIMM14/DNAJC19. Interacts with DNAJC19. Directly interacts with DNAJC15; this interaction counteracts DNAJC15-dependent stimulation of HSPA9 ATPase activity. Associates with the TIM23 complex. As to expression, expressed in trabecular bone and cartilage and by differentiated chondrocytes localized in the hypertrophic zone and by osteoblasts at early developmental stages.

It is found in the mitochondrion inner membrane. In terms of biological role, regulates ATP-dependent protein translocation into the mitochondrial matrix. Inhibits DNAJC19 stimulation of HSPA9/Mortalin ATPase activity. The protein is Mitochondrial import inner membrane translocase subunit TIM16 of Mus musculus (Mouse).